A 96-amino-acid polypeptide reads, in one-letter code: uncharacterized protein (96 aa).

This is an uncharacterized protein from Homo sapiens (Human).